The following is a 695-amino-acid chain: N-terminal acetyltransferase A complex subunit-like protein C418.02 (695 aa).

TPR repeat units lie at residues 8–41 (EAFLFDRSIDQFEKGQYSKSLKTIQSVLKKKPKH), 43–75 (DSVALLGLNLCKLHDSRSALLKCGYASSIDPKS), 76–109 (QFCWHALAIVYRETKDYNNSLKCYQNALAISPNN), 111–143 (SLWYDAAYLQAQLGLYQPLFDNWNRLLQLDSSN), 145–177 (EYRLCFTLSAFLSGNYKESLEQIQYLISSCNLS), 217–250 (FNFEHIKADFAFRQKNYEESIYLYARLLIKFPNR), 262–296 (WNFYKSGGLALDLLLKRTDSLIKTFSEILQTGISV), 365–398 (LWCTYCLCLAHYKLGDYEESNYWLNLAIDHTPTY), 399–432 (PELFLAKAKIFLCMGEIEEALCSFKRSVELDKSD), and 477–510 (VWFLVEDGESLLRQKLYGLALKRFHSIYQIYKKW).

In terms of assembly, component of the N-terminal acetyltransferase A (NatA) complex.

It localises to the cytoplasm. It is found in the nucleus. Its function is as follows. Non-catalytic component of the NatA N-terminal acetyltransferase, which catalyzes acetylation of proteins beginning with Met-Ser, Met-Gly and Met-Ala. N-acetylation plays a role in normal eukaryotic translation and processing, protect against proteolytic degradation and protein turnover. The polypeptide is N-terminal acetyltransferase A complex subunit-like protein C418.02 (Schizosaccharomyces pombe (strain 972 / ATCC 24843) (Fission yeast)).